We begin with the raw amino-acid sequence, 198 residues long: dTTP/UTP pyrophosphatase (198 aa).

Aspartate 78 acts as the Proton acceptor in catalysis.

The protein belongs to the Maf family. YhdE subfamily. The cofactor is a divalent metal cation.

It localises to the cytoplasm. It catalyses the reaction dTTP + H2O = dTMP + diphosphate + H(+). The catalysed reaction is UTP + H2O = UMP + diphosphate + H(+). Nucleoside triphosphate pyrophosphatase that hydrolyzes dTTP and UTP. May have a dual role in cell division arrest and in preventing the incorporation of modified nucleotides into cellular nucleic acids. In Chromobacterium violaceum (strain ATCC 12472 / DSM 30191 / JCM 1249 / CCUG 213 / NBRC 12614 / NCIMB 9131 / NCTC 9757 / MK), this protein is dTTP/UTP pyrophosphatase.